A 165-amino-acid chain; its full sequence is Cysteine-rich hydrophobic domain-containing protein 2 (165 aa).

Positions 1–26 form a coiled coil; the sequence is MADFDEIYEEEEDEERALEEQLLKYS. The CHIC motif (Cys-rich) motif lies at 88–106; sequence CGCLCCCCTLGCSMWPVIC.

It belongs to the CHIC family. In terms of processing, palmitoylation in the CHIC motif is required for membrane association.

Its subcellular location is the cell membrane. It is found in the cytoplasmic vesicle. This Homo sapiens (Human) protein is Cysteine-rich hydrophobic domain-containing protein 2 (CHIC2).